We begin with the raw amino-acid sequence, 138 residues long: Large ribosomal subunit protein uL16 (138 aa).

This sequence belongs to the universal ribosomal protein uL16 family. Part of the 50S ribosomal subunit.

Functionally, binds 23S rRNA and is also seen to make contacts with the A and possibly P site tRNAs. The protein is Large ribosomal subunit protein uL16 of Acholeplasma laidlawii (strain PG-8A).